The chain runs to 275 residues: Probable ABC transporter permease protein PH1216 (275 aa).

A run of 6 helical transmembrane segments spans residues 10–30, 73–93, 105–125, 137–157, 181–203, and 241–261; these read LLYI…WSAI, IFTT…GFTI, LLAL…IPLV, ILGL…LLFT, IYTK…YQFT, and IQMA…IALG. The 193-residue stretch at 68-260 folds into the ABC transmembrane type-1 domain; sequence ILNSLIFTTF…LPTLLIMIAL (193 aa).

This sequence belongs to the binding-protein-dependent transport system permease family. MalFG subfamily.

The protein localises to the cell membrane. In terms of biological role, probably part of a binding-protein-dependent transport system PH1214/15/16. Probably responsible for the translocation of the substrate across the membrane. This Pyrococcus horikoshii (strain ATCC 700860 / DSM 12428 / JCM 9974 / NBRC 100139 / OT-3) protein is Probable ABC transporter permease protein PH1216.